A 205-amino-acid polypeptide reads, in one-letter code: Urease accessory protein UreG (205 aa).

Residue 14–21 (GPVGSGKT) coordinates GTP.

The protein belongs to the SIMIBI class G3E GTPase family. UreG subfamily. Homodimer. UreD, UreF and UreG form a complex that acts as a GTP-hydrolysis-dependent molecular chaperone, activating the urease apoprotein by helping to assemble the nickel containing metallocenter of UreC. The UreE protein probably delivers the nickel.

Its subcellular location is the cytoplasm. Facilitates the functional incorporation of the urease nickel metallocenter. This process requires GTP hydrolysis, probably effectuated by UreG. This chain is Urease accessory protein UreG, found in Enterobacter sp. (strain 638).